The chain runs to 729 residues: Catalase-peroxidase (729 aa).

The disordered stretch occupies residues 1–20 (MHNGSNGSVEQRDSMPETSR). Over residues 10 to 20 (EQRDSMPETSR) the composition is skewed to basic and acidic residues. Positions 91–214 (WHAAGTYRTT…LGATVMGLIY (124 aa)) form a cross-link, tryptophyl-tyrosyl-methioninium (Trp-Tyr) (with M-240). The Proton acceptor role is filled by H92. The tryptophyl-tyrosyl-methioninium (Tyr-Met) (with W-91) cross-link spans 214–240 (YVNPEGPESTPDPEWSAQRIRKSFGRM). Residue H255 coordinates heme b.

The protein belongs to the peroxidase family. Peroxidase/catalase subfamily. Homodimer or homotetramer. The cofactor is heme b. Formation of the three residue Trp-Tyr-Met cross-link is important for the catalase, but not the peroxidase activity of the enzyme.

The enzyme catalyses H2O2 + AH2 = A + 2 H2O. It catalyses the reaction 2 H2O2 = O2 + 2 H2O. Bifunctional enzyme with both catalase and broad-spectrum peroxidase activity. The sequence is that of Catalase-peroxidase from Salinibacter ruber (strain DSM 13855 / M31).